The chain runs to 128 residues: uncharacterized protein (128 aa).

2 consecutive transmembrane segments (helical) span residues 52 to 72 and 91 to 111; these read LLVI…GIFL and LFVA…VMLI.

The protein localises to the cell membrane. This is an uncharacterized protein from Mycoplasma pneumoniae (strain ATCC 29342 / M129 / Subtype 1) (Mycoplasmoides pneumoniae).